A 109-amino-acid polypeptide reads, in one-letter code: AMTDVLSAEDIKKAVGAFSAAESFNYKKFFEMVGLKKKSPEDVKKVFHILDKDRSGFIEEEELKFVLKGFTPDGRDLSDKETKALLAAGDKDGDGKIGADEFATMVAES.

The residue at position 1 (Ala-1) is an N-acetylalanine. EF-hand domains lie at 38-73 (KSPEDVKKVFHILDKDRSGFIEEEELKFVLKGFTPD) and 77-109 (LSDKETKALLAAGDKDGDGKIGADEFATMVAES). The Ca(2+) site is built by Asp-51, Asp-53, Ser-55, Glu-62, Asp-90, Asp-92, Asp-94, Lys-96, and Glu-101.

Belongs to the parvalbumin family.

Its function is as follows. In muscle, parvalbumin is thought to be involved in relaxation after contraction. It binds two calcium ions. The sequence is that of Parvalbumin, muscle from Gallus gallus (Chicken).